A 592-amino-acid polypeptide reads, in one-letter code: Isocitrate dehydrogenase kinase/phosphatase 1 (592 aa).

ATP is bound by residues 337–343 (APGTPGM) and Lys-358. Residue Asp-393 is part of the active site.

The protein belongs to the AceK family.

It is found in the cytoplasm. It catalyses the reaction L-seryl-[isocitrate dehydrogenase] + ATP = O-phospho-L-seryl-[isocitrate dehydrogenase] + ADP + H(+). Functionally, bifunctional enzyme which can phosphorylate or dephosphorylate isocitrate dehydrogenase (IDH) on a specific serine residue. This is a regulatory mechanism which enables bacteria to bypass the Krebs cycle via the glyoxylate shunt in response to the source of carbon. When bacteria are grown on glucose, IDH is fully active and unphosphorylated, but when grown on acetate or ethanol, the activity of IDH declines drastically concomitant with its phosphorylation. This is Isocitrate dehydrogenase kinase/phosphatase 1 from Pseudoalteromonas translucida (strain TAC 125).